A 231-amino-acid polypeptide reads, in one-letter code: Flagellar L-ring protein (231 aa).

An N-terminal signal peptide occupies residues 1 to 18 (MNRLMIVSLLGIATALGG). Cys19 is lipidated: N-palmitoyl cysteine. A lipid anchor (S-diacylglycerol cysteine) is attached at Cys19. The segment at 118 to 141 (LSLSAEYGGSRDAKGDSQAGQSNS) is disordered.

The protein belongs to the FlgH family. As to quaternary structure, the basal body constitutes a major portion of the flagellar organelle and consists of four rings (L,P,S, and M) mounted on a central rod.

The protein resides in the cell outer membrane. It is found in the bacterial flagellum basal body. Functionally, assembles around the rod to form the L-ring and probably protects the motor/basal body from shearing forces during rotation. The sequence is that of Flagellar L-ring protein from Pseudomonas aeruginosa (strain UCBPP-PA14).